The primary structure comprises 637 residues: 1-deoxy-D-xylulose-5-phosphate synthase (637 aa).

Thiamine diphosphate contacts are provided by residues His-75 and 116–118 (AHS). Position 147 (Asp-147) interacts with Mg(2+). Thiamine diphosphate contacts are provided by residues 148 to 149 (GA), Asn-177, Tyr-288, and Glu-370. A Mg(2+)-binding site is contributed by Asn-177.

Belongs to the transketolase family. DXPS subfamily. As to quaternary structure, homodimer. It depends on Mg(2+) as a cofactor. Thiamine diphosphate serves as cofactor.

The enzyme catalyses D-glyceraldehyde 3-phosphate + pyruvate + H(+) = 1-deoxy-D-xylulose 5-phosphate + CO2. Its pathway is metabolic intermediate biosynthesis; 1-deoxy-D-xylulose 5-phosphate biosynthesis; 1-deoxy-D-xylulose 5-phosphate from D-glyceraldehyde 3-phosphate and pyruvate: step 1/1. Functionally, catalyzes the acyloin condensation reaction between C atoms 2 and 3 of pyruvate and glyceraldehyde 3-phosphate to yield 1-deoxy-D-xylulose-5-phosphate (DXP). This Cupriavidus metallidurans (strain ATCC 43123 / DSM 2839 / NBRC 102507 / CH34) (Ralstonia metallidurans) protein is 1-deoxy-D-xylulose-5-phosphate synthase.